The primary structure comprises 319 residues: Free fatty acid receptor 3 (319 aa).

Residues 1–15 (MGTSFFLGNYWLFFS) lie on the Extracellular side of the membrane. The helical transmembrane segment at 16-36 (VYLLVFLVGLPLNVMALVVFV) threads the bilayer. The Cytoplasmic segment spans residues 37–43 (GKLRRRP). A helical transmembrane segment spans residues 44–64 (VAVDLLLLNLTISDLLLLLFL). Over 65 to 98 (PFRMVEAACGMRWLLPFIFCPLSGFLFFTTIYLT) the chain is Extracellular. Cys-84 and Cys-165 are disulfide-bonded. Residues 99-119 (SLFLTAVSIERFLSVAYPLWY) traverse the membrane as a helical segment. Over 120–127 (KTRPRLAQ) the chain is Cytoplasmic. A helical membrane pass occupies residues 128–148 (AGLVSVVCWFLASAHCSVVYI). The Extracellular portion of the chain corresponds to 149–183 (TEYWGNATYSQGTNGTCYLEFREDQLAILLPVRLE). Residues Asn-154 and Asn-162 are each glycosylated (N-linked (GlcNAc...) asparagine). A helical transmembrane segment spans residues 184–206 (MAVVLFMVPLCITSYCYSRLVWI). Topologically, residues 207 to 218 (LSRGASRRRRKR) are cytoplasmic. The helical transmembrane segment at 219–239 (IMGLLAATLLIFFVCFGPYNM) threads the bilayer. Residues 240–254 (SHVVGYVSRESPSWR) are Extracellular-facing. The helical transmembrane segment at 255 to 275 (SYVLLLSTLNSCIDPLVFYFS) threads the bilayer. Residues 276-319 (SSKFQADFHQLLGRLLRTCVPWTQQVSLELKVKNGEEPSKECPS) lie on the Cytoplasmic side of the membrane.

This sequence belongs to the G-protein coupled receptor 1 family. In terms of tissue distribution, expressed in white adipose tissue and skeletal muscle (at protein level). Abundantly expressed in sympathetic ganglia such as the superior cervical ganglion. Also expressed by intestinal endocrine cells.

It is found in the cell membrane. G protein-coupled receptor that is activated by a major product of dietary fiber digestion, the short chain fatty acids (SCFAs), and that plays a role in the regulation of whole-body energy homeostasis and in intestinal immunity. In omnivorous mammals, the short chain fatty acids acetate, propionate and butyrate are produced primarily by the gut microbiome that metabolizes dietary fibers. SCFAs serve as a source of energy but also act as signaling molecules. That G protein-coupled receptor is probably coupled to the pertussis toxin-sensitive, G(i/o)-alpha family of G proteins. Its activation results in the formation of inositol 1,4,5-trisphosphate, the mobilization of intracellular calcium, the phosphorylation of the MAPK3/ERK1 and MAPK1/ERK2 kinases and the inhibition of intracellular cAMP accumulation. Activated by SCFAs and by beta-hydroxybutyrate, a ketone body produced by the liver upon starvation, it inhibits N-type calcium channels and modulates the activity of sympathetic neurons through a signaling cascade involving the beta and gamma subunits of its coupled G protein, phospholipase C and MAP kinases. Thereby, it may regulate energy expenditure through the control of the sympathetic nervous system that controls for instance heart rate. Upon activation by SCFAs accumulating in the intestine, it may also signal to the brain via neural circuits which in turn would regulate intestinal gluconeogenesis. May also control the production of hormones involved in whole-body energy homeostasis. May for instance, regulate blood pressure through renin secretion. May also regulate secretion of the PYY peptide by enteroendocrine cells and control gut motility, intestinal transit rate, and the harvesting of energy from SCFAs produced by gut microbiota. May also indirectly regulate the production of LEP/Leptin, a hormone acting on the CNS to inhibit food intake, in response to the presence of short-chain fatty acids in the intestine. Finally, may also play a role in glucose homeostasis. Besides its role in energy homeostasis, may play a role in intestinal immunity. May mediate the activation of the inflammatory and immune response by SCFAs in the gut, regulating the rapid production of chemokines and cytokines by intestinal epithelial cells. Exhibits an SCFA-independent constitutive G protein-coupled receptor activity. The protein is Free fatty acid receptor 3 (Ffar3) of Mus musculus (Mouse).